A 93-amino-acid chain; its full sequence is Chromosomal protein MC1 (93 aa).

Residues 1–43 (SNTRNFVLRDEEGNEHGVFTGKQPRQAALKAANRGDGTKSNPD) form a disordered region.

Its function is as follows. Protects DNA against thermal denaturation and modulates transcription. This Methanosarcina barkeri protein is Chromosomal protein MC1.